The sequence spans 1456 residues: RNA replication protein (1456 aa).

The Alphavirus-like MT domain occupies 59–225 (NPYSIELHTH…HEFSHLQSVK (167 aa)). 2 disordered regions span residues 474–500 (DLAG…KKEY) and 512–571 (TRKH…GAGT). Residues 491-500 (REPEGDKKEY) show a composition bias toward basic and acidic residues. A compositionally biased stretch (basic residues) spans 512–528 (TRKHNRETKSRAAKKAK). The segment covering 529–541 (RLAEIQDSINRDQ) has biased composition (basic and acidic residues). A (+)RNA virus helicase ATP-binding domain is found at 695-862 (DVKNKRIGAI…VFAKYCRYYL (168 aa)). Residue 735-742 (GAGGSGKS) coordinates ATP. The region spanning 863-997 (NATHRNKKDL…VVREQALREY (135 aa)) is the (+)RNA virus helicase C-terminal domain. Residues 1236–1343 (RPSLANDYTA…DCVPEIKQSF (108 aa)) form the RdRp catalytic domain.

It belongs to the potexvirus/carlavirus RNA replication protein family.

The enzyme catalyses RNA(n) + a ribonucleoside 5'-triphosphate = RNA(n+1) + diphosphate. It catalyses the reaction ATP + H2O = ADP + phosphate + H(+). In terms of biological role, RNA replication. The central part of this protein possibly functions as an ATP-binding helicase. This chain is RNA replication protein, found in Potato virus X (strain HB) (PVX).